Here is a 157-residue protein sequence, read N- to C-terminus: Transcription antitermination protein NusB (157 aa).

It belongs to the NusB family.

Its function is as follows. Involved in transcription antitermination. Required for transcription of ribosomal RNA (rRNA) genes. Binds specifically to the boxA antiterminator sequence of the ribosomal RNA (rrn) operons. In Xylella fastidiosa (strain M12), this protein is Transcription antitermination protein NusB.